The primary structure comprises 1151 residues: MDEPPFTEAALEQALAEPCELDAALLTDIEDMLQLINNQDSDFPGLFDAPYAGVAGGTDPTSPDASSPGSPTPPPSTMSSPLEGFLGGARTPPPPPVSPTQPAPTPLKMYPSVPAFSPGPGIKEEPVPLTILQPPTPQPLSGALLPQSLPALAPPQLSPAPVLGYPSPPGSFSSATPPGSTSQTLPGLPLASLPGVLPVSVHTQVQSAAPQQLLTATATPVVSPGTTTVTSQIQQVPVLLQPHFIKADSLLLTTMKTDMGTPVKAAGIGSLAPGTAVQAAPLQTLVSGGTILATVPLVVDTDKLPINRLAAGGKALSSGQSRGEKRTAHNAIEKRYRSSINDKIIELKDLVVGTEAKLNKSAVLRKAIDYIRFLQQSNQKLKQENLSLRTAAHKSKSLKDLVSCSSGGRTDVPMEGVKPEVVDTLSPPPSDAGSPSQSSPLSLGSRGSSSGGSGSDSEPDSPVFEDSQMKPEQLPAPHGRGMLDRSRLALCVLVFLCLSCNPLASLMGSWALPGPSDATSAYHGPWRSVLGAEGRDGPGWVLWLLPPLVWLTNGLLVLLFLALLFVYGEPVTRPHSDPAVRFWRHRKQADLDLARGDFAQAAQQLWLALRALGRPLPTSHLDLACSLLWNLIRHLLQRLWVGRWLAGRAGGLRRDSALEADTRTSACDAALVYHKLHQLHTMGKYPGGHLDAANLALSALNLAECAGDALSVAVLAEVYVAAALRVKTSLPRALHFLTRFFLSSARQACLAQSGSVPVAMQWLCHPVGHRFFVDGDWAVCGAPRDSLYSVAGNPVDPLAQVTQLFREHLLEQALHCVAQPSPGPGSADGDREFSEALGFLQLLNSCCDTAGAPACSFSIASSTAATAGTDPVAKWWASLTAVVTHWLGRDEEAAERLYPLVEHLPRALQESERPLPRAALHSFKAARALLGRGKAESGSASLAMCEKASGYLQDSLAATPAGSSIDKAMQLLLCDLLLVARTSLWQRQKPPPPSQASQGSSSGAQASALELRGFQRDLSGLRRLAQSFRPAMRRVFLHEATARLMAGASPARTHQLLDRSLRRRAGPCGRGGAAAAAAAELEPRPTRREQAEALLLASCYLPPGFLSAPGQRVGMLAEAARTLEKLGDRRLLHDCQQMLMRLGGGTTVTSS.

The interval 1-59 (MDEPPFTEAALEQALAEPCELDAALLTDIEDMLQLINNQDSDFPGLFDAPYAGVAGGTD) is transcriptional activation (acidic). The Cytoplasmic segment spans residues 1–487 (MDEPPFTEAA…HGRGMLDRSR (487 aa)). Positions 27–35 (TDIEDMLQL) match the 9aaTAD motif. Disordered stretches follow at residues 39-125 (QDSD…IKEE) and 164-184 (GYPSPPGSFSSATPPGSTSQT). Low complexity predominate over residues 57–69 (GTDPTSPDASSPG). The segment covering 91 to 105 (TPPPPPVSPTQPAPT) has biased composition (pro residues). A phosphoserine mark is found at Ser98 and Ser117. The span at 170-184 (GSFSSATPPGSTSQT) shows a compositional bias: polar residues. An interaction with LMNA region spans residues 234–497 (QQVPVLLQPH…LALCVLVFLC (264 aa)). A bHLH domain is found at 324–374 (EKRTAHNAIEKRYRSSINDKIIELKDLVVGTEAKLNKSAVLRKAIDYIRFL). Phosphoserine; by SIK1 is present on residues Ser338 and Ser339. Residues 374–396 (LQQSNQKLKQENLSLRTAAHKSK) form a leucine-zipper region. Ser397 bears the Phosphoserine; by AMPK mark. Positions 399-479 (KDLVSCSSGG…KPEQLPAPHG (81 aa)) are disordered. Ser403 carries the phosphoserine; by SIK1 modification. The segment covering 431-448 (DAGSPSQSSPLSLGSRGS) has biased composition (low complexity). Ser457 carries the phosphoserine modification. Residues 488 to 508 (LALCVLVFLCLSCNPLASLMG) traverse the membrane as a helical segment. Residues 509-547 (SWALPGPSDATSAYHGPWRSVLGAEGRDGPGWVLWLLPP) lie on the Lumenal side of the membrane. A helical membrane pass occupies residues 548–568 (LVWLTNGLLVLLFLALLFVYG). Over 569 to 1151 (EPVTRPHSDP…LGGGTTVTSS (583 aa)) the chain is Cytoplasmic. The segment at 987-1006 (RQKPPPPSQASQGSSSGAQA) is disordered. Residues 995 to 1006 (QASQGSSSGAQA) show a composition bias toward low complexity. Ser1060 carries the post-translational modification Phosphoserine.

The protein belongs to the SREBP family. As to quaternary structure, efficient DNA binding of the soluble transcription factor fragment requires dimerization with another bHLH protein. Interacts with CEBPA, the interaction produces a transcriptional synergy. Interacts with LMNA. In terms of assembly, forms a tight complex with SCAP, the SCAP-SREBP complex, in the endoplasmic reticulum membrane and the Golgi apparatus. Interacts with PAQR3; the interaction anchors the SCAP-SREBP complex to the Golgi apparatus in low cholesterol conditions. In terms of processing, processed in the Golgi apparatus, releasing the protein from the membrane. At low cholesterol the SCAP-SREBP complex is recruited into COPII vesicles for export from the endoplasmic reticulum. In the Golgi, complex SREBPs are cleaved sequentially by site-1 (MBTPS1, S1P) and site-2 (MBTPS2, S2P) proteases. The first cleavage by site-1 protease occurs within the luminal loop, the second cleavage by site-2 protease occurs within the first transmembrane domain, releasing the transcription factor from the Golgi membrane. Phosphorylated by AMPK, leading to suppress protein processing and nuclear translocation, and repress target gene expression. Phosphorylation at Ser-403 by SIK1 represses activity possibly by inhibiting DNA-binding. Post-translationally, SCAP-free SREBF1 is ubiquitinated by the BCR(ARMC5) complex, leading to its degradation. In terms of processing, ubiquitinated; the nuclear form has a rapid turnover and is rapidly ubiquitinated and degraded by the proteasome in the nucleus.

The protein resides in the endoplasmic reticulum membrane. It is found in the golgi apparatus membrane. Its subcellular location is the cytoplasmic vesicle. The protein localises to the COPII-coated vesicle membrane. It localises to the nucleus. Activation by cleavage is down-regulated upon activation of SIRT3-dependent PRKAA1/AMPK-alpha signaling cascade which leads to inhibition of ATP-consuming lipogenesis to restore cellular energy balance. Its function is as follows. Precursor of the transcription factor form (Processed sterol regulatory element-binding protein 1), which is embedded in the endoplasmic reticulum membrane. Low sterol concentrations promote processing of this form, releasing the transcription factor form that translocates into the nucleus and activates transcription of genes involved in cholesterol biosynthesis and lipid homeostasis. In terms of biological role, key transcription factor that regulates expression of genes involved in cholesterol biosynthesis and lipid homeostasis. Binds to the sterol regulatory element 1 (SRE-1) (5'-ATCACCCCAC-3'). Has dual sequence specificity binding to both an E-box motif (5'-ATCACGTGA-3') and to SRE-1 (5'-ATCACCCCAC-3'). Regulates the promoters of genes involved in cholesterol biosynthesis and the LDL receptor (LDLR) pathway of sterol regulation. The sequence is that of Sterol regulatory element-binding protein 1 (SREBF1) from Sus scrofa (Pig).